Here is a 443-residue protein sequence, read N- to C-terminus: ATP-dependent protease ATPase subunit HslU (443 aa).

Residues Ile18 and 60 to 65 (GVGKTE) each bind ATP. A disordered region spans residues 139 to 161 (ARDSGFDANPSEENNATRQKFRK). The ATP site is built by Asp256, Glu321, and Arg393.

Belongs to the ClpX chaperone family. HslU subfamily. In terms of assembly, a double ring-shaped homohexamer of HslV is capped on each side by a ring-shaped HslU homohexamer. The assembly of the HslU/HslV complex is dependent on binding of ATP.

The protein resides in the cytoplasm. In terms of biological role, ATPase subunit of a proteasome-like degradation complex; this subunit has chaperone activity. The binding of ATP and its subsequent hydrolysis by HslU are essential for unfolding of protein substrates subsequently hydrolyzed by HslV. HslU recognizes the N-terminal part of its protein substrates and unfolds these before they are guided to HslV for hydrolysis. This Nitrosomonas eutropha (strain DSM 101675 / C91 / Nm57) protein is ATP-dependent protease ATPase subunit HslU.